The following is a 134-amino-acid chain: kinetoplast-associated protein 3 (134 aa).

Positions 1–10 are excised as a propeptide; that stretch reads MLRRSPTLLR. Residues 106-124 are compositionally biased toward low complexity; it reads PKAPKAAKSASSKVKTAAK. A disordered region spans residues 106–134; sequence PKAPKAAKSASSKVKTAAKTAKKTTAARK. Residues 125–134 show a composition bias toward basic residues; sequence TAKKTTAARK.

It belongs to the KAP family. In terms of assembly, associates with the kinetoplast DNA network.

The protein resides in the mitochondrion matrix. Its subcellular location is the kinetoplast. Functionally, histone H1-like DNA-binding protein involved in the organization and segregation of kinetoplast DNA (kDNA). The mitochondrial DNA of kinetoplastid protozoa consists of about 5,000 minicircles and 20 to 30 maxicircles. These circular DNAs are held together by catenation into a highly organized compact disk structure referred to as a kinetoplast DNA (kDNA) network. Binds preferentially to a specific fragment of minicircle DNA and is able to compact kDNA networks through DNA charge neutralization and condensation. In Crithidia fasciculata, this protein is kinetoplast-associated protein 3 (KAP3).